We begin with the raw amino-acid sequence, 464 residues long: tRNA modification GTPase MnmE (464 aa).

The (6S)-5-formyl-5,6,7,8-tetrahydrofolate site is built by Arg-25, Glu-87, and Lys-130. Residues 226–386 form the TrmE-type G domain; it reads GLSVVLAGQP…LRAELLRIAG (161 aa). K(+) is bound at residue Asn-236. Residues 236–241, 255–261, and 280–283 each bind GTP; these read NVGKSS, TPIAGTT, and DTAG. Ser-240 contributes to the Mg(2+) binding site. Residues Thr-255, Ile-257, and Thr-260 each coordinate K(+). Thr-261 lines the Mg(2+) pocket. Lys-464 is a (6S)-5-formyl-5,6,7,8-tetrahydrofolate binding site.

This sequence belongs to the TRAFAC class TrmE-Era-EngA-EngB-Septin-like GTPase superfamily. TrmE GTPase family. In terms of assembly, homodimer. Heterotetramer of two MnmE and two MnmG subunits. The cofactor is K(+).

It localises to the cytoplasm. Its function is as follows. Exhibits a very high intrinsic GTPase hydrolysis rate. Involved in the addition of a carboxymethylaminomethyl (cmnm) group at the wobble position (U34) of certain tRNAs, forming tRNA-cmnm(5)s(2)U34. The polypeptide is tRNA modification GTPase MnmE (Burkholderia ambifaria (strain MC40-6)).